The chain runs to 5161 residues: Nonribosomal peptide synthetase TES (5161 aa).

Residues 37-436 (EEQAIARPNA…GRKDSQTKVR (400 aa)) are adenylation 1. The Carrier 1 domain occupies 569–645 (QPETEKEQIL…KLTSAAIPSV (77 aa)). O-(pantetheine 4'-phosphoryl)serine is present on serine 606. A condensation 1 region spans residues 659 to 1098 (GHVAQSFAQG…LLCDVELSKL (440 aa)). The segment at 1122–1522 (RQQTSLCPSR…GRMDGQVKIR (401 aa)) is adenylation 2. The interval 1630-1742 (MNEWLDDTID…YLFKTTQQLL (113 aa)) is methyltransferase (M) domain 1. The Carrier 2 domain maps to 2068–2141 (TRAESKIQQL…QLAAVAQEHV (74 aa)). Serine 2102 bears the O-(pantetheine 4'-phosphoryl)serine mark. Residues 2179 to 2593 (EDIYPCSPLQ…MLTQDDEQQL (415 aa)) are condensation 2. The interval 2614 to 3010 (DQAKSRPEAD…GRKDGQVKVR (397 aa)) is adenylation 3. Residues 3139-3215 (KPETKHEMAL…RLANRLVDPP (77 aa)) enclose the Carrier 3 domain. Serine 3176 carries the post-translational modification O-(pantetheine 4'-phosphoryl)serine. The tract at residues 3232 to 3668 (LQSFAQGRLW…VVPLMTVEAH (437 aa)) is condensation 3. The segment at 3694-4098 (FRQQAAMQPS…GRIDGQVKIR (405 aa)) is adenylation 4. The interval 4203-4329 (EMKEWLEETI…KVDGVKTLFF (127 aa)) is methyltransferase (M) domain 2. The Carrier 4 domain occupies 4643–4725 (RELSTAELKV…QFSQHEGEQK (83 aa)). The residue at position 4680 (serine 4680) is an O-(pantetheine 4'-phosphoryl)serine. The tract at residues 4785 to 5093 (FFLNLGTRVD…HQNLNEHPEF (309 aa)) is condensation 4.

It belongs to the NRP synthetase family.

The protein operates within phytotoxin biosynthesis. Its function is as follows. Nonribosomal peptide synthetase; part of the gene cluster that mediates the biosynthesis of the phytotoxin tentoxin, an inhibitor the F1-ATPase activity of chloroplasts, resulting in chlorosis in sensitive plants. Tentoxin is a cyclic tetrapeptide that consists of four amino acid residues: glycine (Gly), alanine (Ala), leucine (Leu), and dehydrophenylalanine (DPhe). In addition, both the Ala and DPhe residues are N-methylated. The nonribosomal peptide synthetase TES assembles tentoxin from the four substrate amino acids. The adenylation domains of each of the 4 modules are responsible for the activation of Gly, Ala, Leu and DPhe, respectively. In addition, the N-methyltransferase domains in the second and fourth modules of TES could be responsible for N-methylation of Ala and DPhe residues. Finally, the condensation domain located in the termination module probably catalyzes the formation of the intramolecular macrocyclization and then the release of tentoxin. The cytochrome P450 monooxygenase TES1 is predicted to be involved in the formation of DPhe. The polypeptide is Nonribosomal peptide synthetase TES (Alternaria alternata (Alternaria rot fungus)).